The chain runs to 117 residues: Immunoglobulin heavy variable 4-28 (117 aa).

The signal sequence occupies residues 1 to 19 (MKHLWFFLLLVAAPRWVLS). A framework-1 region spans residues 20–44 (QVQLQESGPGLVKPSDTLSLTCAVS). The region spanning 20 to 117 (QVQLQESGPG…VDTAVYYCAR (98 aa)) is the Ig-like domain. Cys41 and Cys115 are disulfide-bonded. Positions 45–53 (GYSISSSNW) are complementarity-determining-1. The framework-2 stretch occupies residues 54 to 70 (WGWIRQPPGKGLEWIGY). A complementarity-determining-2 region spans residues 71–77 (IYYSGST). The framework-3 stretch occupies residues 78-115 (YYNPSLKSRVTMSVDTSKNQFSLKLSSVTAVDTAVYYC). Residues 116-117 (AR) are complementarity-determining-3.

Immunoglobulins are composed of two identical heavy chains and two identical light chains; disulfide-linked.

It localises to the secreted. Its subcellular location is the cell membrane. Functionally, v region of the variable domain of immunoglobulin heavy chains that participates in the antigen recognition. Immunoglobulins, also known as antibodies, are membrane-bound or secreted glycoproteins produced by B lymphocytes. In the recognition phase of humoral immunity, the membrane-bound immunoglobulins serve as receptors which, upon binding of a specific antigen, trigger the clonal expansion and differentiation of B lymphocytes into immunoglobulins-secreting plasma cells. Secreted immunoglobulins mediate the effector phase of humoral immunity, which results in the elimination of bound antigens. The antigen binding site is formed by the variable domain of one heavy chain, together with that of its associated light chain. Thus, each immunoglobulin has two antigen binding sites with remarkable affinity for a particular antigen. The variable domains are assembled by a process called V-(D)-J rearrangement and can then be subjected to somatic hypermutations which, after exposure to antigen and selection, allow affinity maturation for a particular antigen. This Homo sapiens (Human) protein is Immunoglobulin heavy variable 4-28.